A 101-amino-acid polypeptide reads, in one-letter code: Small ribosomal subunit protein cS23 (101 aa).

The protein belongs to the chloroplast-specific ribosomal protein cS23 family. In terms of assembly, part of the 30S ribosomal subunit.

It localises to the plastid. Its subcellular location is the chloroplast. Functionally, probably a ribosomal protein or a ribosome-associated protein. This is Small ribosomal subunit protein cS23 (ycf65) from Cyanidium caldarium (Red alga).